The following is an 822-amino-acid chain: ATP-dependent zinc metalloprotease FTSH 7, chloroplastic (822 aa).

Low complexity-rich tracts occupy residues 1–34 (MASA…RRAS), 80–94 (AEAS…SSSG), and 101–122 (AAAA…AAAT). Disordered stretches follow at residues 1-44 (MASA…ASVR) and 67-136 (PAAR…ENKW). Residues 1–70 (MASASAAAET…RVLRRPPAAR (70 aa)) constitute a chloroplast transit peptide. 2 consecutive transmembrane segments (helical) span residues 154 to 174 (IVQG…IFAL) and 288 to 308 (GGLL…AVVL). 386–393 (GLPGTGKT) is an ATP binding site. Zn(2+) is bound at residue His-611. Glu-612 is a catalytic residue. 2 residues coordinate Zn(2+): His-615 and Asp-694.

This sequence in the N-terminal section; belongs to the AAA ATPase family. The protein in the C-terminal section; belongs to the peptidase M41 family. Zn(2+) is required as a cofactor.

The protein resides in the plastid. Its subcellular location is the chloroplast thylakoid membrane. In terms of biological role, probable ATP-dependent zinc metallopeptidase. The sequence is that of ATP-dependent zinc metalloprotease FTSH 7, chloroplastic (FTSH7) from Oryza sativa subsp. japonica (Rice).